Here is a 378-residue protein sequence, read N- to C-terminus: uncharacterized protein (378 aa).

A Guanylate cyclase domain is found at 208–317 (GIGFADLSSF…NPVNLAARLV (110 aa)).

This sequence belongs to the adenylyl cyclase class-4/guanylyl cyclase family.

This is an uncharacterized protein from Mycobacterium bovis (strain ATCC BAA-935 / AF2122/97).